A 273-amino-acid chain; its full sequence is Short-chain dehydrogenase fogB (273 aa).

NADP(+) contacts are provided by Ile-16, Asp-66, Arg-128, Tyr-174, Lys-178, Val-207, and Thr-209. Tyr-174 functions as the Proton donor in the catalytic mechanism. Lys-178 functions as the Lowers pKa of active site Tyr in the catalytic mechanism.

This sequence belongs to the short-chain dehydrogenases/reductases (SDR) family.

Short-chain dehydrogenase; part of the gene cluster that mediates the biosynthesis of flavoglaucin and congeners (including aspergin, dihydroauroglaucin and auroglaucin), prenylated salicylaldehyde derivatives carrying a saturated or an unsaturated C-7 side chain. The PKS fogA releases the carboxylic acid (8E,10E,12E)-3,5,7-trihydroxytetradeca-8,10,12-trienoic acid as its product, as well as derivatives with one and two double bonds. FogA is indeed able to reduce the initial triketide, thus being at least partially responsible for the differently saturated heptyl side chains of flavoglaucin congeners. The oxidoreductases fogB, fogC and fogD modify the nascent polyketide in fogA-bound form and, together, fogA, fogB, fogC and fogD are necessary for the formation of the aromatic core and the cyclized PKS products are released as salicyl alcohols. In particular, fogB is responsible for oxidation of a hydroxyl group or reduction of remaining double bond(s) at the C-7 residue whereas fogD is probably involved in the reductive release of the modified PKS products. The cytochrome P450 monooxygenase fogE is then responsible for the hydroxylation at C-3 of the benzene ring. The fogE products are substrates of the prenyltransferase fogH and the prenylated benzyl alcohols are subsequently oxidized by the fogF to produce the final aryl aldehydes flavoglaucin and congeners. The short-chain dehydrogenase fogG does not seem to be involved in the biosynthesis of the prenylated salicylaldehyde derivatives. In Aspergillus ruber (strain CBS 135680), this protein is Short-chain dehydrogenase fogB.